Here is a 129-residue protein sequence, read N- to C-terminus: Small ribosomal subunit protein uS11 (129 aa).

The protein belongs to the universal ribosomal protein uS11 family. As to quaternary structure, part of the 30S ribosomal subunit. Interacts with proteins S7 and S18. Binds to IF-3.

Functionally, located on the platform of the 30S subunit, it bridges several disparate RNA helices of the 16S rRNA. Forms part of the Shine-Dalgarno cleft in the 70S ribosome. This chain is Small ribosomal subunit protein uS11, found in Rhodopseudomonas palustris (strain BisB18).